Reading from the N-terminus, the 87-residue chain is U3-theraphotoxin-Hhn1m (87 aa).

Positions 1 to 24 (MVNMKASMFLTFAGLVLLFVVCYA) are cleaved as a signal peptide. The propeptide occupies 25-52 (SESEEKEFPKEMLSSIFAVDNDFKQEER). 3 disulfides stabilise this stretch: cysteine 54–cysteine 67, cysteine 61–cysteine 72, and cysteine 66–cysteine 79.

The protein belongs to the neurotoxin 10 (Hwtx-1) family. 51 (Hntx-8) subfamily. Hntx-8 sub-subfamily. Expressed by the venom gland.

It is found in the secreted. In terms of biological role, ion channel inhibitor. The polypeptide is U3-theraphotoxin-Hhn1m (Cyriopagopus hainanus (Chinese bird spider)).